The sequence spans 309 residues: Ribonuclease Z (309 aa).

Residues His-61, His-63, Asp-65, His-66, His-144, Asp-212, and His-271 each coordinate Zn(2+). Asp-65 acts as the Proton acceptor in catalysis.

It belongs to the RNase Z family. Homodimer. The cofactor is Zn(2+).

It carries out the reaction Endonucleolytic cleavage of RNA, removing extra 3' nucleotides from tRNA precursor, generating 3' termini of tRNAs. A 3'-hydroxy group is left at the tRNA terminus and a 5'-phosphoryl group is left at the trailer molecule.. In terms of biological role, zinc phosphodiesterase, which displays some tRNA 3'-processing endonuclease activity. Probably involved in tRNA maturation, by removing a 3'-trailer from precursor tRNA. The polypeptide is Ribonuclease Z (Clostridium acetobutylicum (strain ATCC 824 / DSM 792 / JCM 1419 / IAM 19013 / LMG 5710 / NBRC 13948 / NRRL B-527 / VKM B-1787 / 2291 / W)).